The sequence spans 890 residues: Translation initiation factor IF-2 (890 aa).

The disordered stretch occupies residues 45-304 (LIDHLNQKNS…LQQGFQKPAQ (260 aa)). Over residues 67–81 (STLNIPGTGGKSKSV) the composition is skewed to polar residues. The span at 92–217 (VKRDPQEAER…RMAEENKWTD (126 aa)) shows a compositional bias: basic and acidic residues. The span at 252–266 (GRGRNAKAARPKKGN) shows a compositional bias: basic residues. Positions 267–280 (KHAESKADREEARA) are enriched in basic and acidic residues. Positions 389–558 (PRAPVVTIMG…LLQAEVLELK (170 aa)) constitute a tr-type G domain. The G1 stretch occupies residues 398-405 (GHVDHGKT). Position 398 to 405 (398 to 405 (GHVDHGKT)) interacts with GTP. The interval 423–427 (GITQH) is G2. Residues 444 to 447 (DTPG) form a G3 region. Residues 444–448 (DTPGH) and 498–501 (NKID) contribute to the GTP site. The segment at 498 to 501 (NKID) is G4. Positions 534–536 (SAK) are G5. Residue Lys808 is modified to N6-acetyllysine.

It belongs to the TRAFAC class translation factor GTPase superfamily. Classic translation factor GTPase family. IF-2 subfamily.

The protein resides in the cytoplasm. In terms of biological role, one of the essential components for the initiation of protein synthesis. Protects formylmethionyl-tRNA from spontaneous hydrolysis and promotes its binding to the 30S ribosomal subunits. Also involved in the hydrolysis of GTP during the formation of the 70S ribosomal complex. The polypeptide is Translation initiation factor IF-2 (Escherichia coli O127:H6 (strain E2348/69 / EPEC)).